Consider the following 1107-residue polypeptide: Miniconductance mechanosensitive channel MscM (1107 aa).

Positions 1–19 (MRLIITFLMAWCLSWGAYA) are cleaved as a signal peptide. Transmembrane regions (helical) follow at residues 467-487 (VMML…ILVG), 522-542 (LFWS…LGYG), 551-571 (LAVA…VVMI), 600-620 (YLMS…FDNL), 628-648 (SLGR…TLSL), 674-694 (MMIG…LATA), 698-718 (LARL…YHVI), 785-805 (ILML…HSAF), 828-848 (PITL…TQLV), 875-895 (TITK…MIGI), and 910-930 (GLGF…IILF).

The protein belongs to the MscS (TC 1.A.23) family. In terms of assembly, homoheptamer.

The protein localises to the cell inner membrane. Functionally, mechanosensitive channel that protects cells against hypoosmotic stress when highly overexpressed. Gates spontaneously in response to increased membrane tension. The polypeptide is Miniconductance mechanosensitive channel MscM (mscM) (Escherichia coli (strain K12)).